The following is a 344-amino-acid chain: Transcription factor HHO3 (344 aa).

2 disordered regions span residues Lys-90–Lys-122 and Ala-156–Arg-212. Acidic residues predominate over residues Asp-97–Glu-106. The segment covering Thr-178–Thr-188 has biased composition (low complexity). Positions Ser-206 to Arg-266 constitute an HTH myb-type domain. A DNA-binding region (H-T-H motif) is located at residues Pro-237–Arg-262. A disordered region spans residues Pro-306–Ser-344. Positions Gln-310–Glu-319 are enriched in polar residues. The segment covering Thr-330 to Ser-344 has biased composition (low complexity).

It localises to the nucleus. In terms of biological role, probable transcription factor involved in phosphate signaling in roots. The polypeptide is Transcription factor HHO3 (Arabidopsis thaliana (Mouse-ear cress)).